The sequence spans 259 residues: Cobalt-precorrin-4 C(11)-methyltransferase (259 aa).

The protein belongs to the precorrin methyltransferase family.

It carries out the reaction Co-precorrin-4 + S-adenosyl-L-methionine = Co-precorrin-5A + S-adenosyl-L-homocysteine + H(+). It functions in the pathway cofactor biosynthesis; adenosylcobalamin biosynthesis; cob(II)yrinate a,c-diamide from sirohydrochlorin (anaerobic route): step 4/10. Functionally, catalyzes the methylation of C-11 in cobalt-precorrin-4 to form cobalt-precorrin-5A. The sequence is that of Cobalt-precorrin-4 C(11)-methyltransferase (cbiF) from Methanocaldococcus jannaschii (strain ATCC 43067 / DSM 2661 / JAL-1 / JCM 10045 / NBRC 100440) (Methanococcus jannaschii).